Reading from the N-terminus, the 475-residue chain is Ubiquitin carboxyl-terminal hydrolase calypso (475 aa).

The UCH catalytic domain maps to 44–275 (GWLELESDPG…IRFNLMAVVP (232 aa)). Cys130 functions as the Nucleophile in the catalytic mechanism. His212 (proton donor) is an active-site residue. The stretch at 333-360 (AKDLQLLLKNLDTEIAINEQNLADENDR) forms a coiled coil. Residues 374–402 (NYDKFICTFLSMLAHQGVLGELVSQHLLP) form the ULD domain. Positions 404–475 (KKVSGQSAAN…KGRNKCRKRK (72 aa)) are positively charged C-terminal tail required for binding nucleosomes. The tract at residues 411 to 475 (AANRISKQNS…KGRNKCRKRK (65 aa)) is disordered. The segment covering 419–460 (NSAASSAGANAGAAAGVTPKSQQQQQQPQTAASKNGKSPGKT) has biased composition (low complexity). Residues 461–475 (PGRRRKGRNKCRKRK) are compositionally biased toward basic residues.

Belongs to the peptidase C12 family. BAP1 subfamily. As to quaternary structure, catalytic component of the polycomb repressive deubiquitinase (PR-DUB) complex, at least composed of caly/calypso, Asx and sba (MBD5/6 homolog). The PR-DUB complex associates with nucleosomes to mediate deubiquitination of histone H2AK118ub1 substrates; the association requires the positively charged C-terminal tail of caly, probably due to direct binding of DNA. Interacts (via ULD domain) with Asx (via DEUBAD domain); the interaction produces a stable heterodimer with a composite binding site for ubiquitin. Homodimerizes (via coiled-coil hinge-region between the UCH and ULD domains) to mediate assembly of 2 copies of the caly-Asx heterodimer into a bisymmetric tetramer; dimerization enhances PR-DUB association with nucleosomes.

Its subcellular location is the nucleus. It carries out the reaction Thiol-dependent hydrolysis of ester, thioester, amide, peptide and isopeptide bonds formed by the C-terminal Gly of ubiquitin (a 76-residue protein attached to proteins as an intracellular targeting signal).. Functionally, catalytic component of the polycomb repressive deubiquitinase (PR-DUB) complex, a complex that specifically mediates deubiquitination of histone H2A monoubiquitinated at 'Lys-119' (H2AK118ub1). Mediates bisymmetric organization of the PR-DUB complex and is involved in association with nucleosomes to mediate deubiquitination. Does not deubiquitinate monoubiquitinated histone H2B. Required to maintain the transcriptionally repressive state of homeotic genes throughout development. The PR-DUB complex has weak or no activity toward 'Lys-48'- and 'Lys-63'-linked polyubiquitin chains. Polycomb group (PcG) protein. This Drosophila persimilis (Fruit fly) protein is Ubiquitin carboxyl-terminal hydrolase calypso.